The following is a 307-amino-acid chain: Thioredoxin reductase (307 aa).

Residue 34–41 (ESKAHGGQ) coordinates FAD. A disulfide bridge links Cys134 with Cys137. Position 275 to 284 (275 to 284 (DVRAKSFRQV)) interacts with FAD.

It belongs to the class-II pyridine nucleotide-disulfide oxidoreductase family. In terms of assembly, homodimer. Requires FAD as cofactor.

The protein localises to the cytoplasm. The catalysed reaction is [thioredoxin]-dithiol + NADP(+) = [thioredoxin]-disulfide + NADPH + H(+). This Treponema pallidum (strain Nichols) protein is Thioredoxin reductase (trxB).